A 445-amino-acid chain; its full sequence is Phosphoglucosamine mutase (445 aa).

Serine 99 serves as the catalytic Phosphoserine intermediate. Mg(2+)-binding residues include serine 99, aspartate 242, aspartate 244, and aspartate 246. At serine 99 the chain carries Phosphoserine.

The protein belongs to the phosphohexose mutase family. It depends on Mg(2+) as a cofactor. Post-translationally, activated by phosphorylation.

It catalyses the reaction alpha-D-glucosamine 1-phosphate = D-glucosamine 6-phosphate. Its function is as follows. Catalyzes the conversion of glucosamine-6-phosphate to glucosamine-1-phosphate. The sequence is that of Phosphoglucosamine mutase from Helicobacter acinonychis (strain Sheeba).